Here is a 282-residue protein sequence, read N- to C-terminus: Cell cycle checkpoint protein RAD1 (282 aa).

The protein belongs to the rad1 family. In terms of assembly, component of the toroidal 9-1-1 (RAD9-RAD1-HUS1) complex, composed of RAD9A, RAD1 and HUS1. The 9-1-1 complex associates with LIG1, POLB, FEN1, RAD17, HDAC1, RPA1 and RPA2. The 9-1-1 complex associates with the RAD17-RFC complex. RAD1 interacts with POLB, FEN1, HUS1, HUS1B, RAD9A and RAD9B. Interacts with DNAJC7. Interacts with RHNO1; interaction is direct. As to expression, expressed in testis, uterus, bladder, spleen, ovaries, lung, brain and muscle (at protein level).

The protein localises to the nucleus. In terms of biological role, component of the 9-1-1 cell-cycle checkpoint response complex that plays a major role in DNA repair. The 9-1-1 complex is recruited to DNA lesion upon damage by the RAD17-replication factor C (RFC) clamp loader complex. Acts then as a sliding clamp platform on DNA for several proteins involved in long-patch base excision repair (LP-BER). The 9-1-1 complex stimulates DNA polymerase beta (POLB) activity by increasing its affinity for the 3'-OH end of the primer-template and stabilizes POLB to those sites where LP-BER proceeds; endonuclease FEN1 cleavage activity on substrates with double, nick, or gap flaps of distinct sequences and lengths; and DNA ligase I (LIG1) on long-patch base excision repair substrates. The 9-1-1 complex is necessary for the recruitment of RHNO1 to sites of double-stranded breaks (DSB) occurring during the S phase. This is Cell cycle checkpoint protein RAD1 (RAD1) from Homo sapiens (Human).